The primary structure comprises 263 residues: Purine nucleoside phosphorylase SACOL1200 (263 aa).

3 residues coordinate Zn(2+): His-79, Cys-124, and His-141.

The protein belongs to the purine nucleoside phosphorylase YfiH/LACC1 family. In terms of assembly, homodimer. The cofactor is Cu(2+). It depends on Zn(2+) as a cofactor.

The enzyme catalyses adenosine + phosphate = alpha-D-ribose 1-phosphate + adenine. It catalyses the reaction S-methyl-5'-thioadenosine + phosphate = 5-(methylsulfanyl)-alpha-D-ribose 1-phosphate + adenine. The catalysed reaction is inosine + phosphate = alpha-D-ribose 1-phosphate + hypoxanthine. It carries out the reaction adenosine + H2O + H(+) = inosine + NH4(+). Its function is as follows. Purine nucleoside enzyme that catalyzes the phosphorolysis of adenosine and inosine nucleosides, yielding D-ribose 1-phosphate and the respective free bases, adenine and hypoxanthine. Also catalyzes the phosphorolysis of S-methyl-5'-thioadenosine into adenine and S-methyl-5-thio-alpha-D-ribose 1-phosphate. Also has adenosine deaminase activity. This chain is Purine nucleoside phosphorylase SACOL1200, found in Staphylococcus aureus (strain COL).